A 663-amino-acid chain; its full sequence is Protein KINESIN LIGHT CHAIN-RELATED 2 (663 aa).

Over residues 1-14 (MDVGESNERVKDDS) the composition is skewed to basic and acidic residues. 2 disordered regions span residues 1–24 (MDVG…RSPL) and 86–146 (GESK…KVSV). Ser19 bears the Phosphoserine mark. Positions 86–100 (GESKKEIILEKKEES) are enriched in basic and acidic residues. Over residues 102 to 111 (GEGSLSQKKP) the composition is skewed to polar residues. 11 TPR repeats span residues 147–181 (DEES…ALRA), 200–233 (VMSL…PMIE), 243–276 (FAGC…QRQV), 285–318 (GETC…HKEN), 329–363 (AADR…SSQN), 369–402 (AAVD…FKQG), 411–444 (ALVY…YLKP), 454–487 (ATGF…YANA), 495–528 (AGIE…FRNS), 537–570 (GIAL…LEKE), and 579–612 (LAVY…REEK).

It belongs to the kinesin light chain family.

The chain is Protein KINESIN LIGHT CHAIN-RELATED 2 from Arabidopsis thaliana (Mouse-ear cress).